A 302-amino-acid chain; its full sequence is Aspartate carbamoyltransferase catalytic subunit (302 aa).

Arg53 and Thr54 together coordinate carbamoyl phosphate. Residue Lys82 participates in L-aspartate binding. 3 residues coordinate carbamoyl phosphate: Arg103, His131, and Gln134. L-aspartate contacts are provided by Arg164 and Arg223. Carbamoyl phosphate-binding residues include Leu260 and Pro261.

It belongs to the aspartate/ornithine carbamoyltransferase superfamily. ATCase family. Heterooligomer of catalytic and regulatory chains.

The catalysed reaction is carbamoyl phosphate + L-aspartate = N-carbamoyl-L-aspartate + phosphate + H(+). The protein operates within pyrimidine metabolism; UMP biosynthesis via de novo pathway; (S)-dihydroorotate from bicarbonate: step 2/3. Catalyzes the condensation of carbamoyl phosphate and aspartate to form carbamoyl aspartate and inorganic phosphate, the committed step in the de novo pyrimidine nucleotide biosynthesis pathway. The polypeptide is Aspartate carbamoyltransferase catalytic subunit (Methanococcus maripaludis (strain DSM 14266 / JCM 13030 / NBRC 101832 / S2 / LL)).